A 1370-amino-acid polypeptide reads, in one-letter code: Insulin-like growth factor 1 receptor (1370 aa).

The signal sequence occupies residues 1–30 (MKSGSGGGSPTSLWGLVFLSAALSLWPTSG). Cys33 and Cys52 form a disulfide bridge. Asn51, Asn102, and Asn135 each carry an N-linked (GlcNAc...) asparagine glycan. Disulfide bonds link Cys150-Cys178, Cys182-Cys205, Cys192-Cys211, Cys215-Cys224, Cys219-Cys230, Cys231-Cys239, Cys235-Cys248, Cys251-Cys260, Cys264-Cys276, Cys282-Cys303, Cys307-Cys321, Cys324-Cys328, and Cys332-Cys354. N-linked (GlcNAc...) asparagine glycosylation occurs at Asn245. A glycan (N-linked (GlcNAc...) asparagine) is linked at Asn314. Asn418 and Asn439 each carry an N-linked (GlcNAc...) asparagine glycan. A disulfide bond links Cys456 and Cys489. 2 consecutive Fibronectin type-III domains span residues 490–610 (ESDV…TNAS) and 611–709 (VPSI…TEAE). 9 N-linked (GlcNAc...) asparagine glycosylation sites follow: Asn535, Asn608, Asn623, Asn641, Asn748, Asn757, Asn765, Asn901, and Asn914. The Extracellular segment spans residues 742–936 (DVLQVANTTM…AKTTYENFMH (195 aa)). Positions 835 to 928 (IPGPVTWEPR…DPVFFYVPAK (94 aa)) constitute a Fibronectin type-III 3 domain. The helical transmembrane segment at 937–960 (LIIALPVAILLIVGGLVIMLYVFH) threads the bilayer. The Cytoplasmic segment spans residues 961–1370 (RKRNNSRLGN…ALPLPQSSTC (410 aa)). Positions 978 to 981 (NPEY) match the IRS1- and SHC1-binding motif. The residue at position 981 (Tyr981) is a Phosphotyrosine. A Protein kinase domain is found at 1000 to 1275 (ITMNRELGQG…SIKDEMEPSF (276 aa)). ATP-binding positions include 1006–1014 (LGQGSFGMV) and Lys1034. Catalysis depends on Asp1136, which acts as the Proton acceptor. A phosphotyrosine; by autocatalysis mark is found at Tyr1162, Tyr1166, and Tyr1167. Glycyl lysine isopeptide (Lys-Gly) (interchain with G-Cter in ubiquitin) cross-links involve residues Lys1169 and Lys1172. Ser1279 carries the post-translational modification Phosphoserine; by GSK3-beta. Ser1283 is modified (phosphoserine). The interval 1304-1370 (NMESVPLDPS…ALPLPQSSTC (67 aa)) is disordered. Residues 1305–1321 (MESVPLDPSASSASLPL) show a composition bias toward low complexity. The segment covering 1322–1331 (PERHSGHKAE) has biased composition (basic and acidic residues).

The protein belongs to the protein kinase superfamily. Tyr protein kinase family. Insulin receptor subfamily. Tetramer of 2 alpha and 2 beta chains linked by disulfide bonds. The alpha chains contribute to the formation of the ligand-binding domain, while the beta chain carries the kinase domain. Interacts with PIK3R1 and with the PTB/PID domains of IRS1 and SHC1 in vitro when autophosphorylated on tyrosine residues. Forms a hybrid receptor with INSR, the hybrid is a tetramer consisting of 1 alpha chain and 1 beta chain of INSR and 1 alpha chain and 1 beta chain of IGF1R. Interacts with ARRB1 and ARRB2. Interacts with GRB10. Interacts with RACK1. Interacts with SOCS1, SOCS2 and SOCS3. Interacts with 14-3-3 proteins. Interacts with NMD2. Interacts with MAP3K5. Interacts with STAT3. Found in a ternary complex with IGF1 and ITGAV:ITGB3 or ITGA6:ITGB4. Interacts (nascent precursor form) with ZFAND2B. Autophosphorylated on tyrosine residues in response to ligand binding. Autophosphorylation occurs in trans, i.e. one subunit of the dimeric receptor phosphorylates tyrosine residues on the other subunit. Autophosphorylation occurs in a sequential manner; Tyr-1166 is predominantly phosphorylated first, followed by phosphorylation of Tyr-1162 and Tyr-1167. While every single phosphorylation increases kinase activity, all three tyrosine residues in the kinase activation loop (Tyr-1162, Tyr-1166 and Tyr-1167) have to be phosphorylated for optimal activity. Can be autophosphorylated at additional tyrosine residues (in vitro). Autophosphorylated is followed by phosphorylation of juxtamembrane tyrosines and C-terminal serines. May also be phosphorylated at Tyr-1162 and Tyr-1167 by mTORC2. Phosphorylation of Tyr-981 is required for IRS1- and SHC1-binding. Phosphorylation of Ser-1279 by GSK-3beta restrains kinase activity and promotes cell surface expression, it requires a priming phosphorylation at Ser-1283. Dephosphorylated by PTPN1. Post-translationally, polyubiquitinated at Lys-1169 and Lys-1172 through both 'Lys-48' and 'Lys-29' linkages, promoting receptor endocytosis and subsequent degradation by the proteasome. Ubiquitination is facilitated by pre-existing phosphorylation. In terms of processing, sumoylated with SUMO1. Controlled by regulated intramembrane proteolysis (RIP). Undergoes metalloprotease-dependent constitutive ectodomain shedding to produce a membrane-anchored 52 kDa C-Terminal fragment which is further processed by presenilin gamma-secretase to yield an intracellular 50 kDa fragment.

It is found in the cell membrane. It catalyses the reaction L-tyrosyl-[protein] + ATP = O-phospho-L-tyrosyl-[protein] + ADP + H(+). Its activity is regulated as follows. Activated by autophosphorylation at Tyr-1162, Tyr-1166 and Tyr-1167 on the kinase activation loop; phosphorylation at all three tyrosine residues is required for optimal kinase activity. Inhibited by MSC1609119A-1, BMS-754807, PQIP, benzimidazole pyridinone, isoquinolinedione, bis-azaindole, 3-cyanoquinoline, 2,4-bis-arylamino-1,3-pyrimidine, pyrrolopyrimidine, pyrrole-5-carboxaldehyde, picropodophyllin (PPP), tyrphostin derivatives. While most inhibitors bind to the ATP binding pocket, MSC1609119A-1 functions as allosteric inhibitor and binds close to the DFG motif and the activation loop. Dephosphorylated by PTPN1. Its function is as follows. Receptor tyrosine kinase which mediates actions of insulin-like growth factor 1 (IGF1). Binds IGF1 with high affinity and IGF2 and insulin (INS) with a lower affinity. The activated IGF1R is involved in cell growth and survival control. IGF1R is crucial for tumor transformation and survival of malignant cell. Ligand binding activates the receptor kinase, leading to receptor autophosphorylation, and tyrosines phosphorylation of multiple substrates, that function as signaling adapter proteins including, the insulin-receptor substrates (IRS1/2), Shc and 14-3-3 proteins. Phosphorylation of IRSs proteins lead to the activation of two main signaling pathways: the PI3K-AKT/PKB pathway and the Ras-MAPK pathway. The result of activating the MAPK pathway is increased cellular proliferation, whereas activating the PI3K pathway inhibits apoptosis and stimulates protein synthesis. Phosphorylated IRS1 can activate the 85 kDa regulatory subunit of PI3K (PIK3R1), leading to activation of several downstream substrates, including protein AKT/PKB. AKT phosphorylation, in turn, enhances protein synthesis through mTOR activation and triggers the antiapoptotic effects of IGFIR through phosphorylation and inactivation of BAD. In parallel to PI3K-driven signaling, recruitment of Grb2/SOS by phosphorylated IRS1 or Shc leads to recruitment of Ras and activation of the ras-MAPK pathway. In addition to these two main signaling pathways IGF1R signals also through the Janus kinase/signal transducer and activator of transcription pathway (JAK/STAT). Phosphorylation of JAK proteins can lead to phosphorylation/activation of signal transducers and activators of transcription (STAT) proteins. In particular activation of STAT3, may be essential for the transforming activity of IGF1R. The JAK/STAT pathway activates gene transcription and may be responsible for the transforming activity. JNK kinases can also be activated by the IGF1R. IGF1 exerts inhibiting activities on JNK activation via phosphorylation and inhibition of MAP3K5/ASK1, which is able to directly associate with the IGF1R. When present in a hybrid receptor with INSR, binds IGF1. The sequence is that of Insulin-like growth factor 1 receptor (Igf1r) from Rattus norvegicus (Rat).